Consider the following 395-residue polypeptide: Guanine nucleotide-binding protein subunit beta-5b (395 aa).

7 WD repeats span residues 103–142, 145–184, 193–234, 235–276, 279–318, 320–362, and 365–395; these read GHGNKVLCMDWCRDKRRIVSSSQDGKVIVWDAYTTNKEHA, MPCTWVMACAYAPSGCAVACGGLDNKCSVYPLSLDKNENL, MHTN…QSFH, GHSA…NVQS, THDSDINSVKYYPSGDAFASGSDDATCRLYDLRADREVAI, SKDS…RVAI, and GHENRVSTVRVSPDGTAFCSGSWDNTLRIWA.

Belongs to the WD repeat G protein beta family. In terms of assembly, may interact with RGS9; this interaction stabilizes both proteins and increases RGS9 GTPase-activating protein (GAP) activity, hence accelerating the deactivation of D(2) dopamine receptor-mediated signaling.

It is found in the membrane. Enhances GTPase-activating protein (GAP) activity of regulator of G protein signaling (RGS) proteins, such as RGS7 and RGS9, hence involved in the termination of the signaling initiated by the G protein coupled receptors (GPCRs) by accelerating the GTP hydrolysis on the G-alpha subunits, thereby promoting their inactivation. Increases RGS7 GTPase-activating protein (GAP) activity, thereby regulating mood and cognition. Increases RGS9 GTPase-activating protein (GAP) activity, hence contributes to the deactivation of G protein signaling initiated by D(2) dopamine receptors. Along with gnb5a, plays an important role in neuronal signaling, including in the parasympathetic, but not sympathetic, control of heart rate. This chain is Guanine nucleotide-binding protein subunit beta-5b, found in Danio rerio (Zebrafish).